The following is a 334-amino-acid chain: tRNA-dihydrouridine(20/20a) synthase (334 aa).

Residues 18-20 (PMM) and Q71 contribute to the FMN site. C101 serves as the catalytic Proton donor. Residues K140, H172, 212–214 (NGG), and 234–235 (GR) contribute to the FMN site.

Belongs to the Dus family. DusA subfamily. It depends on FMN as a cofactor.

The catalysed reaction is 5,6-dihydrouridine(20) in tRNA + NADP(+) = uridine(20) in tRNA + NADPH + H(+). The enzyme catalyses 5,6-dihydrouridine(20) in tRNA + NAD(+) = uridine(20) in tRNA + NADH + H(+). It carries out the reaction 5,6-dihydrouridine(20a) in tRNA + NADP(+) = uridine(20a) in tRNA + NADPH + H(+). It catalyses the reaction 5,6-dihydrouridine(20a) in tRNA + NAD(+) = uridine(20a) in tRNA + NADH + H(+). Catalyzes the synthesis of 5,6-dihydrouridine (D), a modified base found in the D-loop of most tRNAs, via the reduction of the C5-C6 double bond in target uridines. Specifically modifies U20 and U20a in tRNAs. The chain is tRNA-dihydrouridine(20/20a) synthase from Xanthomonas axonopodis pv. citri (strain 306).